We begin with the raw amino-acid sequence, 622 residues long: Polymerase acidic protein (622 aa).

This sequence belongs to the influenza viruses PA family. As to quaternary structure, RNA polymerase is composed of three subunits: PA, PB1 and PB2.

The protein localises to the virion. Its subcellular location is the host nucleus. Functionally, subunit of the RNA-dependent RNA polymerase which is responsible for replication and transcription of virus RNA segments. The transcription of viral mRNAs occurs by a unique mechanism called cap-snatching. 5' methylated caps of cellular mRNAs are cleaved after 10-13 nucleotides by PA. In turn, these short capped RNAs are used as primers by PB1 for transcription of viral mRNAs. During virus replication, PB1 initiates RNA synthesis and copy vRNA into complementary RNA (cRNA) which in turn serves as a template for the production of more vRNAs. In Thogoto virus (isolate SiAr 126) (Tho), this protein is Polymerase acidic protein.